We begin with the raw amino-acid sequence, 310 residues long: tRNA dimethylallyltransferase 2 (310 aa).

15–22 serves as a coordination point for ATP; the sequence is GPTASGKT. Position 17–22 (17–22) interacts with substrate; the sequence is TASGKT. The interval 40–43 is interaction with substrate tRNA; sequence DSMQ.

The protein belongs to the IPP transferase family. Monomer. Mg(2+) is required as a cofactor.

The catalysed reaction is adenosine(37) in tRNA + dimethylallyl diphosphate = N(6)-dimethylallyladenosine(37) in tRNA + diphosphate. Functionally, catalyzes the transfer of a dimethylallyl group onto the adenine at position 37 in tRNAs that read codons beginning with uridine, leading to the formation of N6-(dimethylallyl)adenosine (i(6)A). The chain is tRNA dimethylallyltransferase 2 from Geotalea uraniireducens (strain Rf4) (Geobacter uraniireducens).